The sequence spans 494 residues: Protein nucleotidyltransferase YdiU (494 aa).

ATP is bound by residues Gly90, Gly92, Arg93, Lys113, Asp125, Gly126, Arg176, and Arg183. The active-site Proton acceptor is Asp252. Asn253 and Asp262 together coordinate Mg(2+). ATP is bound at residue Asp262.

It belongs to the SELO family. It depends on Mg(2+) as a cofactor. The cofactor is Mn(2+).

It catalyses the reaction L-seryl-[protein] + ATP = 3-O-(5'-adenylyl)-L-seryl-[protein] + diphosphate. It carries out the reaction L-threonyl-[protein] + ATP = 3-O-(5'-adenylyl)-L-threonyl-[protein] + diphosphate. The catalysed reaction is L-tyrosyl-[protein] + ATP = O-(5'-adenylyl)-L-tyrosyl-[protein] + diphosphate. The enzyme catalyses L-histidyl-[protein] + UTP = N(tele)-(5'-uridylyl)-L-histidyl-[protein] + diphosphate. It catalyses the reaction L-seryl-[protein] + UTP = O-(5'-uridylyl)-L-seryl-[protein] + diphosphate. It carries out the reaction L-tyrosyl-[protein] + UTP = O-(5'-uridylyl)-L-tyrosyl-[protein] + diphosphate. Its function is as follows. Nucleotidyltransferase involved in the post-translational modification of proteins. It can catalyze the addition of adenosine monophosphate (AMP) or uridine monophosphate (UMP) to a protein, resulting in modifications known as AMPylation and UMPylation. This Alkalilimnicola ehrlichii (strain ATCC BAA-1101 / DSM 17681 / MLHE-1) protein is Protein nucleotidyltransferase YdiU.